The following is a 178-amino-acid chain: ATP synthase subunit delta (178 aa).

It belongs to the ATPase delta chain family. As to quaternary structure, F-type ATPases have 2 components, F(1) - the catalytic core - and F(0) - the membrane proton channel. F(1) has five subunits: alpha(3), beta(3), gamma(1), delta(1), epsilon(1). F(0) has three main subunits: a(1), b(2) and c(10-14). The alpha and beta chains form an alternating ring which encloses part of the gamma chain. F(1) is attached to F(0) by a central stalk formed by the gamma and epsilon chains, while a peripheral stalk is formed by the delta and b chains.

It is found in the cell membrane. F(1)F(0) ATP synthase produces ATP from ADP in the presence of a proton or sodium gradient. F-type ATPases consist of two structural domains, F(1) containing the extramembraneous catalytic core and F(0) containing the membrane proton channel, linked together by a central stalk and a peripheral stalk. During catalysis, ATP synthesis in the catalytic domain of F(1) is coupled via a rotary mechanism of the central stalk subunits to proton translocation. Its function is as follows. This protein is part of the stalk that links CF(0) to CF(1). It either transmits conformational changes from CF(0) to CF(1) or is implicated in proton conduction. This chain is ATP synthase subunit delta, found in Streptococcus pyogenes serotype M4 (strain MGAS10750).